Here is a 1010-residue protein sequence, read N- to C-terminus: Signal peptide, CUB and EGF-like domain-containing protein 2 (1010 aa).

An N-terminal signal peptide occupies residues 1–24 (MGAVWTVRLLCLFLLLLNTRQSAA). The region spanning 28–68 (NTDQCAEGSDACHIDAICQNTPTSYKCTCKTGFKGDGKHCE) is the EGF-like 1; calcium-binding domain. Disulfide bonds link C32/C45, C39/C54, C56/C67, C73/C85, C81/C94, C96/C109, C115/C126, and C122/C135. Residues 69–110 (DIDECDVEYNGGCVHECNNIPGNYRCTCLDGFHLAHDGHNCL) enclose the EGF-like 2; calcium-binding domain. Residues 111 to 147 (DVDECVFNNGGCQHVCVNTMGSYECRCKQGFFLSDNQ) form the EGF-like 3; calcium-binding domain. 2 consecutive EGF-like domains span residues 160–196 (CMNK…QRGC) and 200–235 (CNHG…GRTC). A glycan (N-linked (GlcNAc...) asparagine) is linked at N249. In terms of domain architecture, EGF-like 6 spans 269–304 (CAVNNGGCDSTCKDTSTGVRCSCPVGFTLQPDGKSC). The EGF-like 7; calcium-binding domain maps to 306–346 (DIDECELHNGGCDHYCRNTIGSFECSCRKGFKLLTDERSCQ). 9 cysteine pairs are disulfide-bonded: C310–C321, C317–C330, C332–C345, C351–C361, C357–C370, C372–C384, C390–C401, C397–C410, and C412–C425. The EGF-like 8; calcium-binding domain occupies 347-385 (DIDECFFERTCDHTCVNSPGSFQCVCNKGYTLYGLAHCG). In terms of domain architecture, EGF-like 9; calcium-binding spans 386–426 (DINECSFNNGGCEHTCENTMGSFGCHCRAGYKLHWNKKDCI). Residues N488, N703, N774, and N803 are each glycosylated (N-linked (GlcNAc...) asparagine). The cysteines at positions 822 and 848 are disulfide-linked. Residues 822–934 (CGGELGEFTG…KGFQVPYVTY (113 aa)) form the CUB domain. The tract at residues 860–869 (ILVVVPEIYL) is interaction with the cholesterol-anchor of SHH. An intrachain disulfide couples C875 to C896. N982 carries N-linked (GlcNAc...) asparagine glycosylation.

As to quaternary structure, interacts with SHH via the cholesterol anchor of the dually lipid-modified SHH (ShhNp). Interacts with PTCH1. Forms homooligomers and heterooligomers with SCUBE1 and SCUBE3. Interacts with VEGFR2. N-glycosylated.

It is found in the secreted. Its subcellular location is the cell surface. In terms of biological role, lipid-binding protein required for SHH long-range signaling by binding to the dually lipid-modified SHH (ShhNp) and by promoting ShhNp mobilization, solubilization and release from the cell membrane. Acts by enhancing the proteolytic processing (shedding) of the lipid-modified N- and C- terminal of ShhNp at the cell surface. Synergizes with DISP1 to cause an increase in SHH secretion. Probable cell surface coreceptor for VEGFR2 involved in VEGFR2-mediated angiogenesis. This is Signal peptide, CUB and EGF-like domain-containing protein 2 (scube2) from Danio rerio (Zebrafish).